The primary structure comprises 208 residues: MKEELAVYFIAGTQDIVRGTLPSVLEEALKGGITCFQYREKGAGSLQTASERKEMALECQKLCAKYQVPFIINDDVVLALEIGADGIHVGQNDEEIHQVITSCAGKMKIGLSVHSVSEAEEAERLGAVDYIGVGPIFPTISKADAEPESGTEILKEIRRAGIKLPIVGIGGINEANIAEVLAAGADGVSVISAITRADDYQLVIANLI.

4-amino-2-methyl-5-(diphosphooxymethyl)pyrimidine contacts are provided by residues 37 to 41 (QYREK) and N73. Residues D74 and D93 each contribute to the Mg(2+) site. 4-amino-2-methyl-5-(diphosphooxymethyl)pyrimidine is bound at residue S112. 139 to 141 (TIS) provides a ligand contact to 2-[(2R,5Z)-2-carboxy-4-methylthiazol-5(2H)-ylidene]ethyl phosphate. K142 is a binding site for 4-amino-2-methyl-5-(diphosphooxymethyl)pyrimidine. 2-[(2R,5Z)-2-carboxy-4-methylthiazol-5(2H)-ylidene]ethyl phosphate contacts are provided by residues G171 and 191 to 192 (IS).

This sequence belongs to the thiamine-phosphate synthase family. Mg(2+) serves as cofactor.

It catalyses the reaction 2-[(2R,5Z)-2-carboxy-4-methylthiazol-5(2H)-ylidene]ethyl phosphate + 4-amino-2-methyl-5-(diphosphooxymethyl)pyrimidine + 2 H(+) = thiamine phosphate + CO2 + diphosphate. It carries out the reaction 2-(2-carboxy-4-methylthiazol-5-yl)ethyl phosphate + 4-amino-2-methyl-5-(diphosphooxymethyl)pyrimidine + 2 H(+) = thiamine phosphate + CO2 + diphosphate. The catalysed reaction is 4-methyl-5-(2-phosphooxyethyl)-thiazole + 4-amino-2-methyl-5-(diphosphooxymethyl)pyrimidine + H(+) = thiamine phosphate + diphosphate. Its pathway is cofactor biosynthesis; thiamine diphosphate biosynthesis; thiamine phosphate from 4-amino-2-methyl-5-diphosphomethylpyrimidine and 4-methyl-5-(2-phosphoethyl)-thiazole: step 1/1. Its function is as follows. Condenses 4-methyl-5-(beta-hydroxyethyl)thiazole monophosphate (THZ-P) and 2-methyl-4-amino-5-hydroxymethyl pyrimidine pyrophosphate (HMP-PP) to form thiamine monophosphate (TMP). This is Thiamine-phosphate synthase from Listeria welshimeri serovar 6b (strain ATCC 35897 / DSM 20650 / CCUG 15529 / CIP 8149 / NCTC 11857 / SLCC 5334 / V8).